The sequence spans 214 residues: MDISIADLRLDYNLEELLESETSADPFIVFKQWLERAVSSGRLEPNAMTLATISPEGKPRARMVLLKDFDPRGFVLFTNYHSAKGQELIANPNAALVFWWGELQRQIRIEGTVEKISEEESDNYFFVRPWESRLGAWASNQSEVISGRDILEKRLTELKEEYAGREVPRPPHWGGFRLIPSLIEFWQGRPSRLHDRLCYYRQEDGSWQRQRLAP.

Substrate is bound by residues 9–12 (RLDY) and Lys67. FMN-binding positions include 62–67 (RMVLLK), 77–78 (FT), Lys84, and Gln106. The substrate site is built by Tyr124, Arg128, and Ser132. FMN-binding positions include 141–142 (QS) and Trp186. Substrate is bound at residue 192-194 (RLH). Arg196 is a binding site for FMN.

This sequence belongs to the pyridoxamine 5'-phosphate oxidase family. Homodimer. It depends on FMN as a cofactor.

The catalysed reaction is pyridoxamine 5'-phosphate + O2 + H2O = pyridoxal 5'-phosphate + H2O2 + NH4(+). It catalyses the reaction pyridoxine 5'-phosphate + O2 = pyridoxal 5'-phosphate + H2O2. It functions in the pathway cofactor metabolism; pyridoxal 5'-phosphate salvage; pyridoxal 5'-phosphate from pyridoxamine 5'-phosphate: step 1/1. It participates in cofactor metabolism; pyridoxal 5'-phosphate salvage; pyridoxal 5'-phosphate from pyridoxine 5'-phosphate: step 1/1. Its function is as follows. Catalyzes the oxidation of either pyridoxine 5'-phosphate (PNP) or pyridoxamine 5'-phosphate (PMP) into pyridoxal 5'-phosphate (PLP). This is Pyridoxine/pyridoxamine 5'-phosphate oxidase from Microcystis aeruginosa (strain NIES-843 / IAM M-2473).